Here is a 208-residue protein sequence, read N- to C-terminus: Uracil phosphoribosyltransferase (208 aa).

5-phospho-alpha-D-ribose 1-diphosphate-binding positions include R78, R103, and D130–S138. Uracil contacts are provided by residues I193 and G198–A200. D199 contacts 5-phospho-alpha-D-ribose 1-diphosphate.

The protein belongs to the UPRTase family. Mg(2+) is required as a cofactor.

The enzyme catalyses UMP + diphosphate = 5-phospho-alpha-D-ribose 1-diphosphate + uracil. The protein operates within pyrimidine metabolism; UMP biosynthesis via salvage pathway; UMP from uracil: step 1/1. With respect to regulation, allosterically activated by GTP. Functionally, catalyzes the conversion of uracil and 5-phospho-alpha-D-ribose 1-diphosphate (PRPP) to UMP and diphosphate. This chain is Uracil phosphoribosyltransferase, found in Haemophilus influenzae (strain PittEE).